A 600-amino-acid polypeptide reads, in one-letter code: MRVTTSFPLGTLRDTPSEAEIISHQLLLKGGYIRRVNSGIYAYMPIMLRVIEKISTIIEKELNNIYCSKLLLPQLHPAELWKKSERWEGYTAGEGIMFNLKDRQGKEFGLAPTHEEVITSIASEMINSYKQLPLCFYQIQTKFRDEIRPRFGLMRSREFIMKDAYSFHSSKEDLASFYEKMEKAYENIFKNCGLDTVGVDADSGAIGGAASKEFMVTADAGEDSILFTESGSYAANIEKAVSLPSKEIPLIRSHEEWIETPNQKSIVDICQNNNLDASQIIKVVIFLAKFEDKSEVPILACIRGDQNINEVKLFNLINKKYISNLIHLKIVDDNAIINKNLINFPLGFIGPDINDETIKINSSWDKSWIRIADYSASSLSIFVSGGNKVDFHKVFRAFSFIEKKFLISDIRNAKKGDCISQESNEELKEKRGIEIGHIFQLGQKYSEKLNAKFSDKNGQLKNLWMGCYGIGVTRIAQAAIEQNHDENGISWPIQISPFEILIIPTNLKDPIQKELTQEIYEEFISNQIDVLLDDRDDRAGVKFKDADLIGIPFQIIIGRDSINKEVEFFSRSSKSKIKIASKNLLEKFISESKVMYNKNS.

This sequence belongs to the class-II aminoacyl-tRNA synthetase family. ProS type 1 subfamily. Homodimer.

It localises to the cytoplasm. It catalyses the reaction tRNA(Pro) + L-proline + ATP = L-prolyl-tRNA(Pro) + AMP + diphosphate. Functionally, catalyzes the attachment of proline to tRNA(Pro) in a two-step reaction: proline is first activated by ATP to form Pro-AMP and then transferred to the acceptor end of tRNA(Pro). As ProRS can inadvertently accommodate and process non-cognate amino acids such as alanine and cysteine, to avoid such errors it has two additional distinct editing activities against alanine. One activity is designated as 'pretransfer' editing and involves the tRNA(Pro)-independent hydrolysis of activated Ala-AMP. The other activity is designated 'posttransfer' editing and involves deacylation of mischarged Ala-tRNA(Pro). The misacylated Cys-tRNA(Pro) is not edited by ProRS. In Prochlorococcus marinus subsp. pastoris (strain CCMP1986 / NIES-2087 / MED4), this protein is Proline--tRNA ligase.